Here is a 103-residue protein sequence, read N- to C-terminus: Small ribosomal subunit protein uS10 (103 aa).

It belongs to the universal ribosomal protein uS10 family. Part of the 30S ribosomal subunit.

Involved in the binding of tRNA to the ribosomes. This is Small ribosomal subunit protein uS10 from Chromobacterium violaceum (strain ATCC 12472 / DSM 30191 / JCM 1249 / CCUG 213 / NBRC 12614 / NCIMB 9131 / NCTC 9757 / MK).